A 187-amino-acid polypeptide reads, in one-letter code: Large ribosomal subunit protein uL22 (187 aa).

2 stretches are compositionally biased toward basic and acidic residues: residues 158–168 (TKATDESEQAK) and 178–187 (RQKEKMMRNE). A disordered region spans residues 158 to 187 (TKATDESEQAKKKLSKKKLQRQKEKMMRNE).

The protein belongs to the universal ribosomal protein uL22 family.

This chain is Large ribosomal subunit protein uL22 (RpL17), found in Anopheles gambiae (African malaria mosquito).